Here is a 302-residue protein sequence, read N- to C-terminus: Nitrophorin Cim l NP (302 aa).

A signal peptide spans 1–20 (MKLLLSAGAALAFVLGLCAA). Residue Cys80 participates in heme binding.

Heme b is required as a cofactor. The N-terminus is blocked. As to expression, expressed in salivary glands.

Its subcellular location is the secreted. Its function is as follows. Heme-based protein that delivers nitric oxide gas (NO) to the victim while feeding, resulting in vasodilation. In place of heme, the heme-binding cysteine can also reversibly bind NO when it is present in high concentrations. In Cimex lectularius (Bed bug), this protein is Nitrophorin Cim l NP.